We begin with the raw amino-acid sequence, 902 residues long: Adhesion G-protein coupled receptor D1 (902 aa).

The first 25 residues, 1–25, serve as a signal peptide directing secretion; sequence MKKLLPLCCWHSWLLLFYCDFQVRG. Residues 26–598 lie on the Extracellular side of the membrane; it reads AHTRSHVHPG…GHQVALSSIS (573 aa). N-linked (GlcNAc...) asparagine glycans are attached at residues asparagine 68, asparagine 76, asparagine 83, asparagine 89, asparagine 121, asparagine 183, asparagine 217, asparagine 310, asparagine 330, asparagine 337, asparagine 347, asparagine 422, asparagine 504, asparagine 529, and asparagine 561. The 194-residue stretch at 111–304 folds into the Pentraxin (PTX) domain; the sequence is KGVTFLYYRK…VNTMAPTNAY (194 aa). Positions 399 to 585 constitute a GAIN-B domain; it reads QVAIVGSSSM…AILMQVVPLE (187 aa). 2 cysteine pairs are disulfide-bonded: cysteine 538–cysteine 567 and cysteine 555–cysteine 569. The tract at residues 538–585 is GPS; it reads CAFLDFSSGEGIWSNQGCALTEGNLSYSICRCTHLTNFAILMQVVPLE. A stachel region spans residues 574–582; that stretch reads NFAILMQVV. Glutamine 591 is a 17beta-hydroxy-5alpha-androstan-3-one binding site. The chain crosses the membrane as a helical span at residues 599-619; it reads YIGCSLSVLCLAITLVTFAVL. Residues 620-630 lie on the Cytoplasmic side of the membrane; sequence SSVSTIRNQRY. Residues 631-651 traverse the membrane as a helical segment; the sequence is HIHANLSCAVLVAQVLLLISF. The Extracellular portion of the chain corresponds to 652–661; it reads RFEPGTAPCQ. Cysteine 660 and cysteine 732 are oxidised to a cystine. The helical transmembrane segment at 662–682 threads the bilayer; the sequence is VLAMLLHYFFLSAFAWMLVEG. At 683-702 the chain is on the cytoplasmic side; the sequence is LHLYSMVIKVFGSEDSKHRY. A helical transmembrane segment spans residues 703 to 723; the sequence is YYGIGWGFPLLICIISIVFAM. Over 724-739 the chain is Extracellular; that stretch reads DSYGTSKNCWLSLGNG. A helical membrane pass occupies residues 740–760; that stretch reads AIWAFVAPALFIIVVNIGILI. The Cytoplasmic segment spans residues 761–788; it reads AVTRVISQISAENYKIHGDPSAFKLTAK. The chain crosses the membrane as a helical span at residues 789–809; that stretch reads AVAVLLPILGTSWVFGVLAVN. Over 810 to 812 the chain is Extracellular; it reads NQA. The chain crosses the membrane as a helical span at residues 813–833; the sequence is MVFQYMFAILNSLQGFFIFLF. Residues 834–902 lie on the Cytoplasmic side of the membrane; it reads HCLLNSEVRA…SGHRVDLSAV (69 aa). Residues 865-902 are disordered; the sequence is KPFSSDIMNGTRPATGSTRLSPWDKSSHSGHRVDLSAV. Residues 870–884 show a composition bias toward polar residues; that stretch reads DIMNGTRPATGSTRL. A compositionally biased stretch (basic and acidic residues) spans 889–902; sequence KSSHSGHRVDLSAV.

This sequence belongs to the G-protein coupled receptor 2 family. Adhesion G-protein coupled receptor (ADGR) subfamily. Heterodimer of 2 chains generated by proteolytic processing; the large extracellular N-terminal fragment and the membrane-bound C-terminal fragment predominantly remain associated and non-covalently linked. Interacts with ESYT1; interaction takes place in absence of cytosolic calcium and inhibits the G protein-coupled receptor activity of ADGRD1. Autoproteolytically processed at the GPS region of the GAIN-B domain; this cleavage modulates receptor activity. Cleavage takes place early in the secretory pathway before N-glycosylation.

Its subcellular location is the cell membrane. With respect to regulation, forms a heterodimer of 2 chains generated by proteolytic processing that remain associated through non-covalent interactions mediated by the GAIN-B domain. In the inactivated receptor, the Stachel sequence (also named stalk) is embedded in the GAIN-B domain, where it adopts a beta-strand conformation. On activation, the Stachel moves into the 7 transmembrane region and adopts a twisted hook-shaped configuration that forms contacts within the receptor, leading to coupling of a G-alpha protein, which activates signaling. The cleaved GAIN-B and N-terminal domains can then dissociate from the rest of the receptor. Interaction with ESYT1 in absence of cytosolic calcium inhibits the G protein-coupled receptor activity; interaction and inhibition is relieved when cytosolic calcium increases. Adhesion G-protein coupled receptor (aGPCR) for androgen hormone 5alpha-dihydrotestosterone (5alpha-DHT), also named 17beta-hydroxy-5alpha-androstan-3-one, the most potent hormone among androgens. Also activated by methenolone drug. Ligand binding causes a conformation change that triggers signaling via guanine nucleotide-binding proteins (G proteins) and modulates the activity of downstream effectors, such as adenylate cyclase. ADGRD1 is coupled to G(s) G proteins and mediates activation of adenylate cyclase activity. Acts as a 5alpha-DHT receptor in muscle cells, thereby increasing intracellular cyclic AMP (cAMP) levels and enhancing muscle strength. The chain is Adhesion G-protein coupled receptor D1 (ADGRD1) from Bos taurus (Bovine).